Reading from the N-terminus, the 120-residue chain is Aspartate 1-decarboxylase (120 aa).

Catalysis depends on Ser-25, which acts as the Schiff-base intermediate with substrate; via pyruvic acid. Ser-25 bears the Pyruvic acid (Ser) mark. Thr-57 provides a ligand contact to substrate. Tyr-58 (proton donor) is an active-site residue. Gly-73–Ala-75 is a binding site for substrate.

Belongs to the PanD family. Heterooctamer of four alpha and four beta subunits. The cofactor is pyruvate. Post-translationally, is synthesized initially as an inactive proenzyme, which is activated by self-cleavage at a specific serine bond to produce a beta-subunit with a hydroxyl group at its C-terminus and an alpha-subunit with a pyruvoyl group at its N-terminus.

The protein resides in the cytoplasm. The enzyme catalyses L-aspartate + H(+) = beta-alanine + CO2. The protein operates within cofactor biosynthesis; (R)-pantothenate biosynthesis; beta-alanine from L-aspartate: step 1/1. Its function is as follows. Catalyzes the pyruvoyl-dependent decarboxylation of aspartate to produce beta-alanine. In Ralstonia pickettii (strain 12J), this protein is Aspartate 1-decarboxylase.